The chain runs to 408 residues: Succinylornithine transaminase (408 aa).

Lys252 carries the post-translational modification N6-(pyridoxal phosphate)lysine.

It belongs to the class-III pyridoxal-phosphate-dependent aminotransferase family. AstC subfamily. It depends on pyridoxal 5'-phosphate as a cofactor.

The catalysed reaction is N(2)-succinyl-L-ornithine + 2-oxoglutarate = N-succinyl-L-glutamate 5-semialdehyde + L-glutamate. Its pathway is amino-acid degradation; L-arginine degradation via AST pathway; L-glutamate and succinate from L-arginine: step 3/5. Catalyzes the transamination of N(2)-succinylornithine and alpha-ketoglutarate into N(2)-succinylglutamate semialdehyde and glutamate. Can also act as an acetylornithine aminotransferase. This is Succinylornithine transaminase from Salmonella heidelberg (strain SL476).